The primary structure comprises 83 residues: Small ribosomal subunit protein uS17c (83 aa).

Belongs to the universal ribosomal protein uS17 family. Part of the 30S ribosomal subunit.

The protein localises to the plastid. It localises to the chloroplast. Functionally, one of the primary rRNA binding proteins, it binds specifically to the 5'-end of 16S ribosomal RNA. The sequence is that of Small ribosomal subunit protein uS17c (rps17) from Porphyra purpurea (Red seaweed).